A 350-amino-acid chain; its full sequence is uncharacterized protein (350 aa).

Over residues Lys197–Ser212 the composition is skewed to basic and acidic residues. Residues Lys197–Val217 form a disordered region.

It is found in the plastid. Its subcellular location is the chloroplast. This is an uncharacterized protein from Euglena gracilis.